Reading from the N-terminus, the 439-residue chain is 26S proteasome regulatory subunit 6A (439 aa).

The residue at position 1 (Met1) is an N-acetylmethionine. The residue at position 9 (Ser9) is a Phosphoserine. Position 227-234 (Gly227–Thr234) interacts with ATP. Ser376 carries the post-translational modification Phosphoserine.

Belongs to the AAA ATPase family. Component of the 19S proteasome regulatory particle complex. The 26S proteasome consists of a 20S core particle (CP) and two 19S regulatory subunits (RP). The regulatory particle is made of a lid composed of 9 subunits, a base containing 6 ATPases including PSMC3 and few additional components. Interacts with PAAF1.

Its subcellular location is the cytoplasm. The protein resides in the nucleus. Component of the 26S proteasome, a multiprotein complex involved in the ATP-dependent degradation of ubiquitinated proteins. This complex plays a key role in the maintenance of protein homeostasis by removing misfolded or damaged proteins, which could impair cellular functions, and by removing proteins whose functions are no longer required. Therefore, the proteasome participates in numerous cellular processes, including cell cycle progression, apoptosis, or DNA damage repair. PSMC3 belongs to the heterohexameric ring of AAA (ATPases associated with diverse cellular activities) proteins that unfolds ubiquitinated target proteins that are concurrently translocated into a proteolytic chamber and degraded into peptides. This Rattus norvegicus (Rat) protein is 26S proteasome regulatory subunit 6A (Psmc3).